A 189-amino-acid chain; its full sequence is MARKKKTRRVSDIMPARKVDKKVELPKGKQGKKLTRYELDAKAREDKKKKKRKGLASGSRHSATENNNNHQALAKKDPRLGSRKKVPLIVEFVNKPEKGMTIPPMKVEEKVAKLDPMLELEQLENNECLNQLLDALDAGKTLSAEDQQFVDDCLDRIAQLMDELGISEDDDPEEDLLRTFEKIDINQFR.

The segment at 1–81 (MARKKKTRRV…ALAKKDPRLG (81 aa)) is disordered. Composition is skewed to basic and acidic residues over residues 9 to 27 (RVSD…ELPK) and 35 to 46 (TRYELDAKARED). A compositionally biased stretch (polar residues) spans 60–71 (RHSATENNNNHQ).

It belongs to the YihI family. In terms of assembly, interacts with Der.

Functionally, a GTPase-activating protein (GAP) that modifies Der/EngA GTPase function. May play a role in ribosome biogenesis. This chain is Der GTPase-activating protein YihI, found in Pasteurella multocida (strain Pm70).